A 201-amino-acid chain; its full sequence is Dephospho-CoA kinase (201 aa).

In terms of domain architecture, DPCK spans 7 to 201; the sequence is AIALSGGIGT…IETIKKDFHV (195 aa). 15–20 is a binding site for ATP; the sequence is GTGKST.

The protein belongs to the CoaE family.

It localises to the cytoplasm. The catalysed reaction is 3'-dephospho-CoA + ATP = ADP + CoA + H(+). Its pathway is cofactor biosynthesis; coenzyme A biosynthesis; CoA from (R)-pantothenate: step 5/5. Its function is as follows. Catalyzes the phosphorylation of the 3'-hydroxyl group of dephosphocoenzyme A to form coenzyme A. In Wolinella succinogenes (strain ATCC 29543 / DSM 1740 / CCUG 13145 / JCM 31913 / LMG 7466 / NCTC 11488 / FDC 602W) (Vibrio succinogenes), this protein is Dephospho-CoA kinase.